Consider the following 418-residue polypeptide: Probable cysteine desulfurase 2 (418 aa).

Residue K234 is modified to N6-(pyridoxal phosphate)lysine. C374 functions as the Cysteine persulfide intermediate in the catalytic mechanism.

Belongs to the class-V pyridoxal-phosphate-dependent aminotransferase family. Csd subfamily. Requires pyridoxal 5'-phosphate as cofactor.

It carries out the reaction (sulfur carrier)-H + L-cysteine = (sulfur carrier)-SH + L-alanine. Its function is as follows. Catalyzes the removal of elemental sulfur and selenium atoms from L-cysteine, L-cystine, L-selenocysteine, and L-selenocystine to produce L-alanine. This Mycobacterium leprae (strain TN) protein is Probable cysteine desulfurase 2 (csd2).